The chain runs to 519 residues: Sorting nexin-2 (519 aa).

A compositionally biased stretch (low complexity) spans 30–50; the sequence is STVSTLESSPSSPEPASLPAE. Residues 30-62 form a disordered region; sequence STVSTLESSPSSPEPASLPAEDISANSNGSKPV. At Ser-97 the chain carries Phosphoserine. Phosphothreonine occurs at positions 101 and 104. Residues Ser-117 and Ser-119 each carry the phosphoserine modification. A PX domain is found at 140-269; the sequence is FDIEIGVSDP…QFLESSELPR (130 aa). A 1,2-diacyl-sn-glycero-3-phospho-(1D-myo-inositol-3-phosphate)-binding residues include Arg-183, Ser-185, Lys-211, and Arg-235. Residue Ser-185 is modified to Phosphoserine. Residues 260–519 are interaction with RhoG; sequence QFLESSELPR…AFLPEAKAIA (260 aa). Position 277 is a phosphoserine (Ser-277). Positions 278–295 are membrane-binding amphipathic helix; that stretch reads GAGILRMVNKAADAVNKM. In terms of domain architecture, BAR spans 299–519; the sequence is MNESDAWFEE…AFLPEAKAIA (221 aa). Lys-469 is modified (N6-acetyllysine).

Belongs to the sorting nexin family. Predominantly forms heterodimers with BAR domain-containing sorting nexins SNX5, SNX6 and SNX32; can self-associate to form homodimers. The heterodimers are proposed to self-assemble into helical arrays on the membrane to stabilize and expand local membrane curvature underlying endosomal tubule formation. Thought to be a component of the originally described retromer complex (also called SNX-BAR retromer) which is a pentamer containing the heterotrimeric retromer cargo-selective complex (CSC), also described as vacuolar protein sorting subcomplex (VPS), and a heterodimeric membrane-deforming subcomplex formed between SNX1 or SNX2 and SNX5 or SNX6 (also called SNX-BAR subcomplex); the respective CSC and SNX-BAR subcomplexes associate with low affinity. Interacts with SNX5, SNX6, SNX32, VPS26A, VPS29, VPS35, FNBP1, KALRN, RHOG (GDP-bound form).

Its subcellular location is the early endosome membrane. The protein localises to the cell projection. It localises to the lamellipodium. Functionally, involved in several stages of intracellular trafficking. Interacts with membranes containing phosphatidylinositol 3-phosphate (PtdIns(3P)) or phosphatidylinositol 3,5-bisphosphate (PtdIns(3,5)P2). Acts in part as component of the retromer membrane-deforming SNX-BAR subcomplex. The SNX-BAR retromer mediates retrograde transport of cargo proteins from endosomes to the trans-Golgi network (TGN) and is involved in endosome-to-plasma membrane transport for cargo protein recycling. The SNX-BAR subcomplex functions to deform the donor membrane into a tubular profile called endosome-to-TGN transport carrier (ETC). Can sense membrane curvature and has in vitro vesicle-to-membrane remodeling activity. Required for retrograde endosome-to-TGN transport of TGN38. Promotes KALRN- and RHOG-dependent but retromer-independent membrane remodeling such as lamellipodium formation; the function is dependent on GEF activity of KALRN. This chain is Sorting nexin-2 (Snx2), found in Mus musculus (Mouse).